A 287-amino-acid polypeptide reads, in one-letter code: 4-hydroxybenzoate octaprenyltransferase (287 aa).

A run of 6 helical transmembrane segments spans residues 30 to 50 (ALWI…FTVG), 89 to 109 (WEAV…ILPL), 133 to 153 (FFAI…PMAF), 158 to 178 (GHVP…SVAY), 199 to 221 (ALTF…LGIY), and 267 to 287 (NNWL…AGSF).

Belongs to the UbiA prenyltransferase family. It depends on Mg(2+) as a cofactor.

Its subcellular location is the cell inner membrane. It catalyses the reaction all-trans-octaprenyl diphosphate + 4-hydroxybenzoate = 4-hydroxy-3-(all-trans-octaprenyl)benzoate + diphosphate. It functions in the pathway cofactor biosynthesis; ubiquinone biosynthesis. Functionally, catalyzes the prenylation of para-hydroxybenzoate (PHB) with an all-trans polyprenyl group. Mediates the second step in the final reaction sequence of ubiquinone-8 (UQ-8) biosynthesis, which is the condensation of the polyisoprenoid side chain with PHB, generating the first membrane-bound Q intermediate 3-octaprenyl-4-hydroxybenzoate. The sequence is that of 4-hydroxybenzoate octaprenyltransferase from Paraburkholderia phytofirmans (strain DSM 17436 / LMG 22146 / PsJN) (Burkholderia phytofirmans).